The primary structure comprises 439 residues: Large ribosomal subunit protein mL44 (439 aa).

Disordered regions lie at residues 39–73 (QSTA…SLPS) and 247–282 (KAME…YGNP). Positions 247–257 (KAMEEQDQDKT) are enriched in basic and acidic residues. Acidic residues predominate over residues 258–274 (PDEEEAEMVANEQDQDV).

The protein belongs to the ribonuclease III family. Mitochondrion-specific ribosomal protein mL44 subfamily. As to quaternary structure, component of the mitochondrial large ribosomal subunit (mt-LSU). Mature N.crassa 74S mitochondrial ribosomes consist of a small (37S) and a large (54S) subunit. The 37S small subunit contains a 16S ribosomal RNA (16S mt-rRNA) and 32 different proteins. The 54S large subunit contains a 23S rRNA (23S mt-rRNA) and 42 different proteins. mL44 forms a heterodimer with mL57 and stabilizes rRNA expansion segments 1/2 at a membrane-facing protuberance close to the point of attachment of the ribosome to the translocon in the membrane.

It is found in the mitochondrion. Its function is as follows. Component of the mitochondrial ribosome (mitoribosome), a dedicated translation machinery responsible for the synthesis of mitochondrial genome-encoded proteins, including at least some of the essential transmembrane subunits of the mitochondrial respiratory chain. The mitoribosomes are attached to the mitochondrial inner membrane and translation products are cotranslationally integrated into the membrane. This Neurospora crassa (strain ATCC 24698 / 74-OR23-1A / CBS 708.71 / DSM 1257 / FGSC 987) protein is Large ribosomal subunit protein mL44 (mrpl3).